We begin with the raw amino-acid sequence, 754 residues long: Elongation factor G-1, mitochondrial (754 aa).

The transit peptide at 1–17 directs the protein to the mitochondrion; sequence MARFPTSPAPNRLLRLF. Positions 63-340 constitute a tr-type G domain; the sequence is DKLRNIGISA…GVVSFLPSPN (278 aa). GTP contacts are provided by residues 72 to 79, 139 to 143, and 193 to 196; these read AHIDSGKT, DTPGH, and NKLD.

This sequence belongs to the TRAFAC class translation factor GTPase superfamily. Classic translation factor GTPase family. EF-G/EF-2 subfamily. As to expression, expressed in cotyledons and adult leaves at the same levels.

The protein resides in the mitochondrion. It functions in the pathway protein biosynthesis; polypeptide chain elongation. Mitochondrial GTPase that catalyzes the GTP-dependent ribosomal translocation step during translation elongation. During this step, the ribosome changes from the pre-translocational (PRE) to the post-translocational (POST) state as the newly formed A-site-bound peptidyl-tRNA and P-site-bound deacylated tRNA move to the P and E sites, respectively. Catalyzes the coordinated movement of the two tRNA molecules, the mRNA and conformational changes in the ribosome. The chain is Elongation factor G-1, mitochondrial (MEFG1) from Arabidopsis thaliana (Mouse-ear cress).